A 188-amino-acid polypeptide reads, in one-letter code: Elongation factor P (188 aa).

Belongs to the elongation factor P family.

Its subcellular location is the cytoplasm. The protein operates within protein biosynthesis; polypeptide chain elongation. Functionally, involved in peptide bond synthesis. Stimulates efficient translation and peptide-bond synthesis on native or reconstituted 70S ribosomes in vitro. Probably functions indirectly by altering the affinity of the ribosome for aminoacyl-tRNA, thus increasing their reactivity as acceptors for peptidyl transferase. In Rhodopseudomonas palustris (strain HaA2), this protein is Elongation factor P.